Consider the following 393-residue polypeptide: Large ribosomal subunit protein uL2m (393 aa).

A mitochondrion-targeting transit peptide spans 1–43 (MLVLGSLRSALSCSSTASLISKRNPCYPYGILCRTLSQSVKLW). Residues 337-393 (AMNKCDHPHGGGRGKSKSNKLSMSPWGQLAKGYKTRRGKNQNRMKVKDRPRGKDARL) are disordered. The segment covering 369-380 (YKTRRGKNQNRM) has biased composition (basic residues). The span at 381–393 (KVKDRPRGKDARL) shows a compositional bias: basic and acidic residues.

Belongs to the universal ribosomal protein uL2 family. As to quaternary structure, component of the mitochondrial large ribosomal subunit (mt-LSU). Mature yeast 74S mitochondrial ribosomes consist of a small (37S) and a large (54S) subunit. The 37S small subunit contains a 15S ribosomal RNA (15S mt-rRNA) and 34 different proteins. The 54S large subunit contains a 21S rRNA (21S mt-rRNA) and 46 different proteins. uL2m has a Na/K ligand binding site.

The protein resides in the mitochondrion. In terms of biological role, component of the mitochondrial ribosome (mitoribosome), a dedicated translation machinery responsible for the synthesis of mitochondrial genome-encoded proteins, including at least some of the essential transmembrane subunits of the mitochondrial respiratory chain. The mitoribosomes are attached to the mitochondrial inner membrane and translation products are cotranslationally integrated into the membrane. This chain is Large ribosomal subunit protein uL2m (RML2), found in Saccharomyces cerevisiae (strain ATCC 204508 / S288c) (Baker's yeast).